The chain runs to 1059 residues: Isoleucine--tRNA ligase (1059 aa).

Residues 59–69 (PFANGLPHYGH) carry the 'HIGH' region motif. The 'KMSKS' region signature appears at 637-641 (KMSKS). Lysine 640 is an ATP binding site.

The protein belongs to the class-I aminoacyl-tRNA synthetase family. IleS type 2 subfamily. Monomer. It depends on Zn(2+) as a cofactor.

The protein resides in the cytoplasm. The enzyme catalyses tRNA(Ile) + L-isoleucine + ATP = L-isoleucyl-tRNA(Ile) + AMP + diphosphate. Catalyzes the attachment of isoleucine to tRNA(Ile). As IleRS can inadvertently accommodate and process structurally similar amino acids such as valine, to avoid such errors it has two additional distinct tRNA(Ile)-dependent editing activities. One activity is designated as 'pretransfer' editing and involves the hydrolysis of activated Val-AMP. The other activity is designated 'posttransfer' editing and involves deacylation of mischarged Val-tRNA(Ile). The polypeptide is Isoleucine--tRNA ligase (Mycobacterium leprae (strain TN)).